Here is a 131-residue protein sequence, read N- to C-terminus: Probable calcium-binding protein CML34 (131 aa).

4 consecutive EF-hand domains span residues 1 to 33, 34 to 69, 70 to 97, and 98 to 131; these read MSAK…FSPY, FTQE…MLKE, VFVF…LGKK, and FTEE…IGDI. Asp11, Asn13, Asp15, Lys17, Glu22, Asp47, Asp49, Asn51, Glu53, and Glu58 together coordinate Ca(2+). Residues Asp111, Asp113, Asp115, Tyr117, and Glu122 each contribute to the Ca(2+) site.

Potential calcium sensor. This chain is Probable calcium-binding protein CML34 (CML34), found in Arabidopsis thaliana (Mouse-ear cress).